The primary structure comprises 148 residues: Ubiquitin-conjugating enzyme E2 28 (148 aa).

The UBC core domain maps to 1 to 147 (MASKRILKEL…ARSWTQKYAM (147 aa)). Catalysis depends on Cys85, which acts as the Glycyl thioester intermediate.

The protein belongs to the ubiquitin-conjugating enzyme family. In terms of assembly, interacts with SINAT5. Expressed in seeds, pistils, siliques, hypocotyls and leaves.

It carries out the reaction S-ubiquitinyl-[E1 ubiquitin-activating enzyme]-L-cysteine + [E2 ubiquitin-conjugating enzyme]-L-cysteine = [E1 ubiquitin-activating enzyme]-L-cysteine + S-ubiquitinyl-[E2 ubiquitin-conjugating enzyme]-L-cysteine.. Its pathway is protein modification; protein ubiquitination. In terms of biological role, accepts the ubiquitin from the E1 complex and catalyzes its covalent attachment to other proteins. The chain is Ubiquitin-conjugating enzyme E2 28 from Arabidopsis thaliana (Mouse-ear cress).